Reading from the N-terminus, the 106-residue chain is Flagellar transcriptional regulator FlhD (106 aa).

It belongs to the FlhD family. Homodimer; disulfide-linked. Forms a heterohexamer composed of two FlhC and four FlhD subunits. Each FlhC binds a FlhD dimer, forming a heterotrimer, and a hexamer assembles by dimerization of two heterotrimers.

Its subcellular location is the cytoplasm. Functionally, functions in complex with FlhC as a master transcriptional regulator that regulates transcription of several flagellar and non-flagellar operons by binding to their promoter region. Activates expression of class 2 flagellar genes, including fliA, which is a flagellum-specific sigma factor that turns on the class 3 genes. Also regulates genes whose products function in a variety of physiological pathways. The polypeptide is Flagellar transcriptional regulator FlhD (Burkholderia pseudomallei (strain 1710b)).